Consider the following 350-residue polypeptide: Cell division protein ZipA (350 aa).

Over 1-6 (MEDLQL) the chain is Periplasmic. Residues 7–27 (VLFVLGAIAIVAVLVHGFWSI) form a helical membrane-spanning segment. Topologically, residues 28-350 (RKQQPRTIKE…QYLARIRANA (323 aa)) are cytoplasmic. Disordered stretches follow at residues 36–55 (KEQP…AEGF), 65–136 (VRKL…PSAR), and 187–213 (RVPA…EEPL). Basic and acidic residues-rich tracts occupy residues 65–109 (VRKL…ESRA) and 116–131 (AAHE…HEEP).

Belongs to the ZipA family. As to quaternary structure, interacts with FtsZ via their C-terminal domains.

The protein resides in the cell inner membrane. Its function is as follows. Essential cell division protein that stabilizes the FtsZ protofilaments by cross-linking them and that serves as a cytoplasmic membrane anchor for the Z ring. Also required for the recruitment to the septal ring of downstream cell division proteins. This Shewanella amazonensis (strain ATCC BAA-1098 / SB2B) protein is Cell division protein ZipA.